We begin with the raw amino-acid sequence, 205 residues long: Inactive ribonuclease-like protein 9 (205 aa).

The signal sequence occupies residues 1–24; that stretch reads MMLITTHSLLLLLLLLQLLQPLQF. 3 cysteine pairs are disulfide-bonded: cysteine 97-cysteine 152, cysteine 115-cysteine 167, and cysteine 122-cysteine 129. Asparagine 130 and asparagine 142 each carry an N-linked (GlcNAc...) asparagine glycan.

Belongs to the pancreatic ribonuclease family.

The protein localises to the secreted. Its function is as follows. Does not exhibit any ribonuclease activity. The chain is Inactive ribonuclease-like protein 9 (RNASE9) from Cebus capucinus (White-faced sapajou).